The sequence spans 385 residues: Glucans biosynthesis protein C (385 aa).

10 helical membrane passes run 17 to 37 (AWLM…SHTW), 60 to 80 (MQVF…RYPL), 91 to 111 (VGIP…IMLQ), 137 to 157 (ISHL…VWIF), 173 to 193 (KFSM…YAVI), 212 to 232 (FIVM…LAFI), 245 to 262 (RGST…LLNQ), 274 to 294 (TESV…FSFG), 311 to 331 (ASLF…AYIT), and 338 to 358 (WLGF…LYEI).

This sequence belongs to the acyltransferase 3 family. OpgC subfamily.

The protein localises to the cell membrane. Its pathway is glycan metabolism; osmoregulated periplasmic glucan (OPG) biosynthesis. Necessary for the succinyl substitution of periplasmic glucans. Could catalyze the transfer of succinyl residues from the cytoplasmic side of the membrane to the nascent glucan backbones on the periplasmic side of the membrane. This is Glucans biosynthesis protein C from Escherichia coli O81 (strain ED1a).